Reading from the N-terminus, the 746-residue chain is MDDNYRIFNKNLITNAARRGTPQVCTGNGGFEPQPFDKEYVLQKNKIEECITKTLQSIGDGRISASAYDTAWIALIKDVINRDLPLFPWSLEWIVSNQLRDGSWGDRDFFVPCDRLLSTLACVVALSTWNVHPNETERGILFVKENISKLEDGDDVHTTLGFEILFPALLERARNLGIEGLPYDDPTTQKICAERDLKLDRISKELIINEVPASLLLILEGLENLNWENILKLQSPDGSFLGSPATTAFVFMETKDESCLSYLKKTVQNFGGGAPSLYPVDILTRLLAVDRLQRLGISRFFHSQIEDCLSYIYRFWTGNGVFSGRDSEFCDVNDTSMAFRLLRLHGYNVSPNVFTNFKKGDEFSVYGDDEVVDSPSTMLNLYRASEVRFAGETILEEAKEFSHNFLQQRQGLPNQVLDNCLISKNLHTEIKYELETPWFASLPRLEARFFIERYNAVDEVCIGKSLYRLPDTNEGTYLELAKLDYNRCQEQHQMEWNHMQQWYEDCNLEEFGISKNDILEAHFLAAASIFEAERSGERVAWVKTQILSHILSTYYFIKQSHQDHKPQLSTEKAHIAGQPGKGFKNVQRIISILFEALTQMKKDALEGSNGDISDDLLHEAWGGWLKKLGEGETEERQEAELIARTINVCGGHILSKQILSHHEYKTLSQLTNQICHNLHNSKMIGKEMENEMQLLVQLVLQESSNGISKAIKQTFLVVAKAFYYRAYFSAKQIENHVSIILFEQLV.

A DXDD motif; degenerated motif is present at residues 331 to 334; the sequence is DVND.

Belongs to the terpene synthase family. Tpsc subfamily. In terms of tissue distribution, mostly expressed in stems, and, at low levels, in roots and leaves, but barely in flowers.

The chain is Probably inactive copalyl diphosphate synthase 3 from Isodon rubescens (Rabdosia rubescens).